Reading from the N-terminus, the 449-residue chain is Probable secreted beta-glucosidase ARB_04747 (449 aa).

The N-terminal stretch at 1–21 (MKFSSGILSLAVAASVQSVQA) is a signal peptide. Asparagine 57 carries N-linked (GlcNAc...) asparagine glycosylation. The disordered stretch occupies residues 96–185 (SPPACPAPSY…RPFPDGEIDC (90 aa)). The segment covering 98-125 (PACPAPSYVPSPPAAPSSPPAAPQPPSK) has biased composition (pro residues). Positions 131–150 (EEPKKPEEPKKPEGPKKPEG) are enriched in basic and acidic residues.

It belongs to the SUN family.

The protein localises to the secreted. It localises to the cell wall. Cell surface beta-glucosidase involved in cytokinesis, cell wall biogenesis, adhesion to host tissue; thus playing an important role in the host-pathogen interaction. Has hydrolytic activity on linear (1-&gt;3)-beta-D-glucans such as laminaribiose and other laminarioligosaccharides. The sequence is that of Probable secreted beta-glucosidase ARB_04747 from Arthroderma benhamiae (strain ATCC MYA-4681 / CBS 112371) (Trichophyton mentagrophytes).